Consider the following 99-residue polypeptide: ATP synthase subunit c (99 aa).

The next 2 helical transmembrane spans lie at 23–43 (GAGI…IGAL) and 78–98 (MGIA…LIFV).

This sequence belongs to the ATPase C chain family. In terms of assembly, F-type ATPases have 2 components, F(1) - the catalytic core - and F(0) - the membrane proton channel. F(1) has five subunits: alpha(3), beta(3), gamma(1), delta(1), epsilon(1). F(0) has three main subunits: a(1), b(2) and c(10-14). The alpha and beta chains form an alternating ring which encloses part of the gamma chain. F(1) is attached to F(0) by a central stalk formed by the gamma and epsilon chains, while a peripheral stalk is formed by the delta and b chains.

The protein resides in the cell membrane. In terms of biological role, f(1)F(0) ATP synthase produces ATP from ADP in the presence of a proton or sodium gradient. F-type ATPases consist of two structural domains, F(1) containing the extramembraneous catalytic core and F(0) containing the membrane proton channel, linked together by a central stalk and a peripheral stalk. During catalysis, ATP synthesis in the catalytic domain of F(1) is coupled via a rotary mechanism of the central stalk subunits to proton translocation. Key component of the F(0) channel; it plays a direct role in translocation across the membrane. A homomeric c-ring of between 10-14 subunits forms the central stalk rotor element with the F(1) delta and epsilon subunits. The polypeptide is ATP synthase subunit c (Mycoplasma mobile (strain ATCC 43663 / 163K / NCTC 11711) (Mesomycoplasma mobile)).